Reading from the N-terminus, the 272-residue chain is Hemin import ATP-binding protein HmuV (272 aa).

The ABC transporter domain maps to 2 to 255 (LNAEHLHVAR…DLIERCYGFR (254 aa)). Residue 34 to 41 (GRNGAGKS) participates in ATP binding.

Belongs to the ABC transporter superfamily. Heme (hemin) importer (TC 3.A.1.14.5) family. As to quaternary structure, the complex is composed of two ATP-binding proteins (HmuV), two transmembrane proteins (HmuU) and a solute-binding protein (HmuT).

The protein resides in the cell inner membrane. In terms of biological role, part of the ABC transporter complex HmuTUV involved in hemin import. Responsible for energy coupling to the transport system. The polypeptide is Hemin import ATP-binding protein HmuV (Burkholderia thailandensis (strain ATCC 700388 / DSM 13276 / CCUG 48851 / CIP 106301 / E264)).